Consider the following 163-residue polypeptide: 2-C-methyl-D-erythritol 2,4-cyclodiphosphate synthase (163 aa).

The a divalent metal cation site is built by Asp-8 and His-10. Residues 8-10 (DVH) and 34-35 (HS) each bind 4-CDP-2-C-methyl-D-erythritol 2-phosphate. Residue His-42 participates in a divalent metal cation binding. Residues 56–58 (DIG), 132–135 (TTTE), Phe-139, and Arg-142 each bind 4-CDP-2-C-methyl-D-erythritol 2-phosphate.

The protein belongs to the IspF family. As to quaternary structure, homotrimer. A divalent metal cation serves as cofactor.

The enzyme catalyses 4-CDP-2-C-methyl-D-erythritol 2-phosphate = 2-C-methyl-D-erythritol 2,4-cyclic diphosphate + CMP. It participates in isoprenoid biosynthesis; isopentenyl diphosphate biosynthesis via DXP pathway; isopentenyl diphosphate from 1-deoxy-D-xylulose 5-phosphate: step 4/6. In terms of biological role, involved in the biosynthesis of isopentenyl diphosphate (IPP) and dimethylallyl diphosphate (DMAPP), two major building blocks of isoprenoid compounds. Catalyzes the conversion of 4-diphosphocytidyl-2-C-methyl-D-erythritol 2-phosphate (CDP-ME2P) to 2-C-methyl-D-erythritol 2,4-cyclodiphosphate (ME-CPP) with a corresponding release of cytidine 5-monophosphate (CMP). In Moorella thermoacetica (strain ATCC 39073 / JCM 9320), this protein is 2-C-methyl-D-erythritol 2,4-cyclodiphosphate synthase.